The chain runs to 1287 residues: FYVE zinc finger domain protein UPA1 (1287 aa).

The disordered stretch occupies residues 1–298 (MTIPDPANII…SSTSLSAPAE (298 aa)). Residues 86–99 (DSSSFGSKPSSSAS) show a composition bias toward low complexity. The span at 115-136 (WATSSTTSHPSKASQSTLSPNA) shows a compositional bias: polar residues. The short motif at 128–144 (SQSTLSPNASVFKPSRS) is the PAM2 element. 2 stretches are compositionally biased toward basic and acidic residues: residues 177–187 (RPDHAPLDHEQ) and 201–211 (KVEEQRGDHSI). The segment covering 212 to 235 (PHQNGLVSAQAQTASDAVSTSKYT) has biased composition (polar residues). Positions 239–253 (ADQEEDQDDFVYPGA) match the PAM2L 1 motif. Residues 255-294 (SPSSGQAAVQDEQQAVTDSQTTKSLTKQESDPEASSTSLS) show a composition bias toward polar residues. ANK repeat units follow at residues 366–395 (NGLVPLHFAAKDGKTDIVRWLITQAGAIVE), 400–429 (EGETALHKAAMAGKLSVASLLLSHGADANA), 433–463 (DGWTALHNACSRGYLDLVRLLVDRGHAQIDV), and 468–497 (GAWTPLMNAASKGHLPVVRHLTAKYHADPF). Disordered regions lie at residues 582-630 (NGGK…VGLP), 643-697 (RVGP…ASAQ), 934-960 (REAAGLDEDEDEDAADDDDDEFIYPNS), and 977-1005 (TSGTLSRPSLSQRQSSAASMLRNSVAPSE). The span at 674-695 (STPTPESVLQARRGTSSVNGAS) shows a compositional bias: polar residues. Positions 938–955 (GLDEDEDEDAADDDDDEF) are enriched in acidic residues. The short motif at 941-960 (EDEDEDAADDDDDEFIYPNS) is the PAM2L 2 element. Residues 981–995 (LSRPSLSQRQSSAAS) show a composition bias toward low complexity. Residues 1055–1129 (DEEAKDCIGC…VCNGCHAELQ (75 aa)) form an FYVE-type zinc finger. Positions 1061, 1064, 1077, 1080, 1085, 1088, 1121, and 1124 each coordinate Zn(2+). Residues 1243-1283 (CSICMEDFVANSTIARLPCLCYFHRGCIDSWFKRGRECPVH) form an RING-type; atypical zinc finger.

Belongs to the UPA1 PAM2 domain-binding protein family. As to quaternary structure, part of large ribonucleoprotein complexes (mRNPs) containing RNA-binding proteins RRM4 and PAB1, endosome-binding protein UPA1, core scaffold protein UPA2 and associated factor GRP1. Interacts (via PAM2 motif) with PAB1 (via PABC domain). Interacts (via PAM2L motifs) with RRM4.

The protein resides in the cytoplasm. It localises to the cytoskeleton. The protein localises to the endosome. Functionally, FYVE zinc finger domain protein that functions in endosomal targeting and transport of mRNAs, as well as associated ribosomes. The endosomal mRNA transport regulates polarity of the infectious hyphae by transporting a broad spectrum of cargo mRNAs from the nucleus to cell poles. Involved in chitinase CTS1 secretion. Dispensable for general endosomal functions but crucial for endosomal recruitment of RRM4. This chain is FYVE zinc finger domain protein UPA1, found in Mycosarcoma maydis (Corn smut fungus).